The primary structure comprises 251 residues: Triosephosphate isomerase (251 aa).

10 to 12 (NWK) serves as a coordination point for substrate. Residue H98 is the Electrophile of the active site. E169 (proton acceptor) is an active-site residue. Substrate contacts are provided by residues G175, S213, and 234-235 (GG).

Belongs to the triosephosphate isomerase family. Homodimer.

It is found in the cytoplasm. The catalysed reaction is D-glyceraldehyde 3-phosphate = dihydroxyacetone phosphate. Its pathway is carbohydrate biosynthesis; gluconeogenesis. The protein operates within carbohydrate degradation; glycolysis; D-glyceraldehyde 3-phosphate from glycerone phosphate: step 1/1. Its function is as follows. Involved in the gluconeogenesis. Catalyzes stereospecifically the conversion of dihydroxyacetone phosphate (DHAP) to D-glyceraldehyde-3-phosphate (G3P). The chain is Triosephosphate isomerase from Paracidovorax citrulli (strain AAC00-1) (Acidovorax citrulli).